A 162-amino-acid chain; its full sequence is Lymphocyte antigen 86 (162 aa).

Residues Met1 to Ser19 form the signal peptide. 3 cysteine pairs are disulfide-bonded: Cys33-Cys58, Cys45-Cys154, and Cys102-Cys112. The N-linked (GlcNAc...) asparagine glycan is linked to Asn96. A glycan (N-linked (GlcNAc...) asparagine) is linked at Asn156.

In terms of assembly, M-shaped tetramer of two CD180-LY86 heterodimers. Highly expressed in spleen, liver, brain and thymus, and at lower levels in kidney.

Its subcellular location is the secreted. It localises to the extracellular space. Its function is as follows. May cooperate with CD180 and TLR4 to mediate the innate immune response to bacterial lipopolysaccharide (LPS) and cytokine production. Important for efficient CD180 cell surface expression. This Mus musculus (Mouse) protein is Lymphocyte antigen 86 (Ly86).